The primary structure comprises 1337 residues: C-Jun-amino-terminal kinase-interacting protein 3 (1337 aa).

The 89-residue stretch at 12 to 100 (VVVYQDDYCS…LTQYEREKAL (89 aa)) folds into the RH1 domain. Positions 50 to 80 (EVVKELMPLVVNVLENLDSVLSENQEHEVEL) are kinesin-binding domain (KBD); essential for its function in axon elongation. A coiled-coil region spans residues 58–177 (LVVNVLENLD…HTEMIQTYVE (120 aa)). 2 disordered regions span residues 183–211 (KMQQ…SLNV) and 245–285 (SSSY…PSAA). Residues 184–198 (MQQVGGSGQTESSLP) are compositionally biased toward polar residues. Positions 210-226 (NVFPLADGMVRAQMGGK) are JNK-binding domain (JBD); essential for its function in axon elongation. Over residues 261–270 (SSAAATPSTT) the composition is skewed to low complexity. Thr-266, Thr-276, and Thr-287 each carry phosphothreonine; by MAPK. Positions 271 to 282 (GTKSNTPTSSVP) are enriched in polar residues. Phosphoserine; by ROCK1 occurs at positions 315 and 365. Phosphoserine is present on Ser-366. Residues 424–459 (LLLENSQLLETKNALNVVKNDLIAKVDQLSGEQEVL) form a leucine zipper-like domain (LZ); essential for its function in axon elongation region. A coiled-coil region spans residues 437–555 (ALNVVKNDLI…LQEAVRWTEM (119 aa)). Residues 459–515 (LKGELEAAKQAKVKLENRIKELEEELKRVKSEAVTARREPREEVEDVSSYLCTELDK) form an interaction with NTRK2 region. In terms of domain architecture, RH2 spans 521–595 (RRRFTRVEMA…SPPPAKRSYP (75 aa)). Ser-603 bears the Phosphoserine mark. Residues 633–655 (DDCTSSARREQKREQYRQVREHV) are disordered. Basic and acidic residues predominate over residues 639–655 (ARREQKREQYRQVREHV). At Ser-677 the chain carries Phosphoserine. Disordered regions lie at residues 719 to 772 (WKPH…ATSS) and 859 to 966 (PRSN…TTTS). Positions 739–765 (LTCDREGEGEPKSTHPSPEKKKAKETP) are enriched in basic and acidic residues. 2 stretches are compositionally biased toward polar residues: residues 879 to 892 (VATT…PSQS) and 941 to 952 (ENGSESNGTIVQ).

It belongs to the JIP scaffold family. In terms of assembly, forms homo- or heterooligomeric complexes. The central region of MAPK8IP3 interacts with the C-terminal of MAPK8IP2 but not MAPK8IP1. Binds specific components of the JNK signaling pathway namely MAPK8/JNK1, MAPK9/JNK2 and MAPK10/JNK3 to the N-terminal region, MAP2K4/MKK4 and MAP2K7/MKK7 to the central region and MAP3K11 to the C-terminal region. Binds the TPR motif-containing C-terminal of kinesin light chain, KLC1. Pre-assembled MAPK8IP1 scaffolding complexes are then transported as a cargo of kinesin, to the required subcellular location. Interacts with ROCK1 and this interaction is enhanced by ultraviolet-B (UVB) radiation. Interacts with SH3RF2. Interacts with NTRK2/TRKB and NTRK3/TRKC. In terms of processing, phosphorylation by ROCK1 is crucial for the recruitment of JNK. Highly expressed throughout many regions of the brain and at lower levels in the heart, liver, lung, testes and kidney. All isoforms have been identified in the brain, isoform 1a is also expressed in the spleen and lung.

It localises to the cytoplasm. It is found in the golgi apparatus. The protein localises to the cytoplasmic vesicle. Its subcellular location is the cell projection. The protein resides in the growth cone. It localises to the axon. It is found in the dendrite. The protein localises to the perinuclear region. Its function is as follows. The JNK-interacting protein (JIP) group of scaffold proteins selectively mediates JNK signaling by aggregating specific components of the MAPK cascade to form a functional JNK signaling module. May function as a regulator of vesicle transport, through interactions with the JNK-signaling components and motor proteins. Promotes neuronal axon elongation in a kinesin- and JNK-dependent manner. Activates cofilin at axon tips via local activation of JNK, thereby regulating filopodial dynamics and enhancing axon elongation. Its binding to kinesin heavy chains (KHC), promotes kinesin-1 motility along microtubules and is essential for axon elongation and regeneration. Regulates cortical neuronal migration by mediating NTRK2/TRKB anterograde axonal transport during brain development. Acts as an adapter that bridges the interaction between NTRK2/TRKB and KLC1 and drives NTRK2/TRKB axonal but not dendritic anterograde transport, which is essential for subsequent BDNF-triggered signaling and filopodia formation. The sequence is that of C-Jun-amino-terminal kinase-interacting protein 3 (Mapk8ip3) from Mus musculus (Mouse).